The following is a 215-amino-acid chain: Cytochrome b6 (215 aa).

A helical membrane pass occupies residues I32 to F52. A heme c-binding site is contributed by C35. Residues H86 and H100 each contribute to the heme b site. The next 3 helical transmembrane spans lie at A90 to F110, L116 to Y136, and A186 to I206. The heme b site is built by H187 and H202.

This sequence belongs to the cytochrome b family. PetB subfamily. As to quaternary structure, the 4 large subunits of the cytochrome b6-f complex are cytochrome b6, subunit IV (17 kDa polypeptide, PetD), cytochrome f and the Rieske protein, while the 4 small subunits are PetG, PetL, PetM and PetN. The complex functions as a dimer. It depends on heme b as a cofactor. The cofactor is heme c.

It is found in the plastid. The protein resides in the chloroplast thylakoid membrane. In terms of biological role, component of the cytochrome b6-f complex, which mediates electron transfer between photosystem II (PSII) and photosystem I (PSI), cyclic electron flow around PSI, and state transitions. The chain is Cytochrome b6 from Phaeodactylum tricornutum (strain CCAP 1055/1).